Consider the following 1464-residue polypeptide: Gag-Pol polyprotein (1464 aa).

Residue G2 is the site of N-myristoyl glycine; by host attachment. Residues 7-31 are interaction with Gp41; the sequence is VLRGKKADELERIRLRPGGKKKYRL. The short motif at 16–22 is the Nuclear export signal element; the sequence is LERIRLR. Positions 26–32 match the Nuclear localization signal motif; the sequence is KKKYRLK. Positions 111-136 are disordered; sequence ETGTAEKMPSTSRPTAPSSEKGGNYP. Polar residues predominate over residues 119-128; it reads PSTSRPTAPS. Position 135 is a phosphotyrosine; by host (Y135). Residues 191-228 form an interaction with human PPIA/CYPA and NUP153 region; sequence NCVGDHQAAMQIIREIINEEAAEWDVQHPIPGPLPAGQ. The interval 279-365 is dimerization/Multimerization of capsid protein p24; the sequence is YNPTNILDIK…GGPGQKARLM (87 aa). CCHC-type zinc fingers lie at residues 389-406 and 410-427; these read FKCW…QCRA and QGCW…NCPD. Residues 432–500 are disordered; that stretch reads FLRTGPLGKE…RGLTAPRAGG (69 aa). The segment covering 456–469 has biased composition (low complexity); that stretch reads TNSTPSGSSSGSTG. Positions 473-485 are enriched in basic and acidic residues; that stretch reads AAREKTERAERET. Residues 514 to 518 form a dimerization of protease region; sequence PQFSL. Residues 533 to 602 enclose the Peptidase A2 domain; it reads VEVLLDTGAD…TPINIFGRNI (70 aa). D538 serves as the catalytic For protease activity; shared with dimeric partner. Dimerization of protease regions lie at residues 562–568 and 601–613; these read GIGGFIN and NILT…LNLP. One can recognise a Reverse transcriptase domain in the interval 656 to 846; that stretch reads EGQLEEAPPT…PPYHWMGYEL (191 aa). Positions 722, 797, and 798 each coordinate Mg(2+). The segment at 839–847 is RT 'primer grip'; that stretch reads YHWMGYELW. Positions 1009-1025 match the Tryptophan repeat motif motif; that stretch reads WEQWWDNYWQVTWIPDW. In terms of domain architecture, RNase H type-1 spans 1045–1168; sequence IPGAETFYTD…VDHLVSQGIR (124 aa). 4 residues coordinate Mg(2+): D1054, E1089, D1109, and D1160. Residues 1174–1215 form an Integrase-type zinc finger; that stretch reads EKIEPAQEEHEKYHSNVKELSHKFGIPNLVARQIVNSCAQCQ. The Zn(2+) site is built by H1183, H1187, C1211, and C1214. Positions 1224–1375 constitute an Integrase catalytic domain; the sequence is QVNAELGTWQ…TPSERLINMI (152 aa). Residues D1235, D1287, and E1323 each contribute to the Mg(2+) site. The segment at residues 1394 to 1441 is a DNA-binding region (integrase-type); sequence FRVYFREGRDQLWKGPGELLWKGEGAVLVKVGTDIKIIPRRKAKIIRD.

In terms of assembly, homotrimer; further assembles as hexamers of trimers. Interacts with gp41 (via C-terminus). Interacts with host CALM1; this interaction induces a conformational change in the Matrix protein, triggering exposure of the myristate group. Interacts with host AP3D1; this interaction allows the polyprotein trafficking to multivesicular bodies during virus assembly. Part of the pre-integration complex (PIC) which is composed of viral genome, matrix protein, Vpr and integrase. Homodimer; the homodimer further multimerizes as homohexamers or homopentamers. Interacts with human PPIA/CYPA. Interacts with human NUP153. Interacts with host PDZD8; this interaction stabilizes the capsid. Interacts with monkey TRIM5; this interaction destabilizes the capsid. As to quaternary structure, homodimer, whose active site consists of two apposed aspartic acid residues. In terms of assembly, heterodimer of p66 RT and p51 RT (RT p66/p51). Heterodimerization of RT is essential for DNA polymerase activity. The overall folding of the subdomains is similar in p66 RT and p51 RT but the spatial arrangements of the subdomains are dramatically different. Homotetramer; may further associate as a homohexadecamer. Part of the pre-integration complex (PIC) which is composed of viral genome, matrix protein, Vpr and integrase. Interacts with human SMARCB1/INI1 and human PSIP1/LEDGF isoform 1. Interacts with human KPNA3; this interaction might play a role in nuclear import of the pre-integration complex. Interacts with human NUP153; this interaction might play a role in nuclear import of the pre-integration complex. Mg(2+) is required as a cofactor. In terms of processing, specific enzymatic cleavages by the viral protease yield mature proteins. The protease is released by autocatalytic cleavage. The polyprotein is cleaved during and after budding, this process is termed maturation. Proteolytic cleavage of p66 RT removes the RNase H domain to yield the p51 RT subunit. Nucleocapsid protein p7 might be further cleaved after virus entry.

It localises to the host cell membrane. It is found in the host endosome. The protein resides in the host multivesicular body. The protein localises to the virion membrane. Its subcellular location is the host nucleus. It localises to the host cytoplasm. It is found in the virion. It catalyses the reaction Endopeptidase for which the P1 residue is preferably hydrophobic.. The enzyme catalyses Endohydrolysis of RNA in RNA/DNA hybrids. Three different cleavage modes: 1. sequence-specific internal cleavage of RNA. Human immunodeficiency virus type 1 and Moloney murine leukemia virus enzymes prefer to cleave the RNA strand one nucleotide away from the RNA-DNA junction. 2. RNA 5'-end directed cleavage 13-19 nucleotides from the RNA end. 3. DNA 3'-end directed cleavage 15-20 nucleotides away from the primer terminus.. It carries out the reaction 3'-end directed exonucleolytic cleavage of viral RNA-DNA hybrid.. The catalysed reaction is DNA(n) + a 2'-deoxyribonucleoside 5'-triphosphate = DNA(n+1) + diphosphate. Its activity is regulated as follows. Protease: The viral protease is inhibited by many synthetic protease inhibitors (PIs), such as amprenavir, atazanavir, indinavir, loprinavir, nelfinavir, ritonavir and saquinavir. Use of protease inhibitors in tritherapy regimens permit more ambitious therapeutic strategies. Reverse transcriptase/ribonuclease H: RT can be inhibited either by nucleoside RT inhibitors (NRTIs) or by non nucleoside RT inhibitors (NNRTIs). NRTIs act as chain terminators, whereas NNRTIs inhibit DNA polymerization by binding a small hydrophobic pocket near the RT active site and inducing an allosteric change in this region. Classical NRTIs are abacavir, adefovir (PMEA), didanosine (ddI), lamivudine (3TC), stavudine (d4T), tenofovir (PMPA), zalcitabine (ddC), and zidovudine (AZT). Classical NNRTIs are atevirdine (BHAP U-87201E), delavirdine, efavirenz (DMP-266), emivirine (I-EBU), and nevirapine (BI-RG-587). The tritherapies used as a basic effective treatment of AIDS associate two NRTIs and one NNRTI. Mediates, with Gag polyprotein, the essential events in virion assembly, including binding the plasma membrane, making the protein-protein interactions necessary to create spherical particles, recruiting the viral Env proteins, and packaging the genomic RNA via direct interactions with the RNA packaging sequence (Psi). Gag-Pol polyprotein may regulate its own translation, by the binding genomic RNA in the 5'-UTR. At low concentration, the polyprotein would promote translation, whereas at high concentration, the polyprotein would encapsidate genomic RNA and then shut off translation. Functionally, targets the polyprotein to the plasma membrane via a multipartite membrane-binding signal, that includes its myristoylated N-terminus. Matrix protein is part of the pre-integration complex. Implicated in the release from host cell mediated by Vpu. Binds to RNA. In terms of biological role, forms the conical core that encapsulates the genomic RNA-nucleocapsid complex in the virion. Most core are conical, with only 7% tubular. The core is constituted by capsid protein hexamer subunits. The core is disassembled soon after virion entry. Host restriction factors such as TRIM5-alpha or TRIMCyp bind retroviral capsids and cause premature capsid disassembly, leading to blocks in reverse transcription. Capsid restriction by TRIM5 is one of the factors which restricts HIV-1 to the human species. Host PIN1 apparently facilitates the virion uncoating. On the other hand, interactions with PDZD8 or CYPA stabilize the capsid. Its function is as follows. Encapsulates and protects viral dimeric unspliced genomic RNA (gRNA). Binds these RNAs through its zinc fingers. Acts as a nucleic acid chaperone which is involved in rearangement of nucleic acid secondary structure during gRNA retrotranscription. Also facilitates template switch leading to recombination. As part of the polyprotein, participates in gRNA dimerization, packaging, tRNA incorporation and virion assembly. Aspartyl protease that mediates proteolytic cleavages of Gag and Gag-Pol polyproteins during or shortly after the release of the virion from the plasma membrane. Cleavages take place as an ordered, step-wise cascade to yield mature proteins. This process is called maturation. Displays maximal activity during the budding process just prior to particle release from the cell. Also cleaves Nef and Vif, probably concomitantly with viral structural proteins on maturation of virus particles. Hydrolyzes host EIF4GI and PABP1 in order to shut off the capped cellular mRNA translation. The resulting inhibition of cellular protein synthesis serves to ensure maximal viral gene expression and to evade host immune response. Functionally, multifunctional enzyme that converts the viral RNA genome into dsDNA in the cytoplasm, shortly after virus entry into the cell. This enzyme displays a DNA polymerase activity that can copy either DNA or RNA templates, and a ribonuclease H (RNase H) activity that cleaves the RNA strand of RNA-DNA heteroduplexes in a partially processive 3' to 5' endonucleasic mode. Conversion of viral genomic RNA into dsDNA requires many steps. A tRNA(3)-Lys binds to the primer-binding site (PBS) situated at the 5'-end of the viral RNA. RT uses the 3' end of the tRNA primer to perform a short round of RNA-dependent minus-strand DNA synthesis. The reading proceeds through the U5 region and ends after the repeated (R) region which is present at both ends of viral RNA. The portion of the RNA-DNA heteroduplex is digested by the RNase H, resulting in a ssDNA product attached to the tRNA primer. This ssDNA/tRNA hybridizes with the identical R region situated at the 3' end of viral RNA. This template exchange, known as minus-strand DNA strong stop transfer, can be either intra- or intermolecular. RT uses the 3' end of this newly synthesized short ssDNA to perform the RNA-dependent minus-strand DNA synthesis of the whole template. RNase H digests the RNA template except for two polypurine tracts (PPTs) situated at the 5'-end and near the center of the genome. It is not clear if both polymerase and RNase H activities are simultaneous. RNase H probably can proceed both in a polymerase-dependent (RNA cut into small fragments by the same RT performing DNA synthesis) and a polymerase-independent mode (cleavage of remaining RNA fragments by free RTs). Secondly, RT performs DNA-directed plus-strand DNA synthesis using the PPTs that have not been removed by RNase H as primers. PPTs and tRNA primers are then removed by RNase H. The 3' and 5' ssDNA PBS regions hybridize to form a circular dsDNA intermediate. Strand displacement synthesis by RT to the PBS and PPT ends produces a blunt ended, linear dsDNA copy of the viral genome that includes long terminal repeats (LTRs) at both ends. In terms of biological role, catalyzes viral DNA integration into the host chromosome, by performing a series of DNA cutting and joining reactions. This enzyme activity takes place after virion entry into a cell and reverse transcription of the RNA genome in dsDNA. The first step in the integration process is 3' processing. This step requires a complex comprising the viral genome, matrix protein, Vpr and integrase. This complex is called the pre-integration complex (PIC). The integrase protein removes 2 nucleotides from each 3' end of the viral DNA, leaving recessed CA OH's at the 3' ends. In the second step, the PIC enters cell nucleus. This process is mediated through integrase and Vpr proteins, and allows the virus to infect a non dividing cell. This ability to enter the nucleus is specific of lentiviruses, other retroviruses cannot and rely on cell division to access cell chromosomes. In the third step, termed strand transfer, the integrase protein joins the previously processed 3' ends to the 5' ends of strands of target cellular DNA at the site of integration. The 5'-ends are produced by integrase-catalyzed staggered cuts, 5 bp apart. A Y-shaped, gapped, recombination intermediate results, with the 5'-ends of the viral DNA strands and the 3' ends of target DNA strands remaining unjoined, flanking a gap of 5 bp. The last step is viral DNA integration into host chromosome. This involves host DNA repair synthesis in which the 5 bp gaps between the unjoined strands are filled in and then ligated. Since this process occurs at both cuts flanking the HIV genome, a 5 bp duplication of host DNA is produced at the ends of HIV-1 integration. Alternatively, Integrase may catalyze the excision of viral DNA just after strand transfer, this is termed disintegration. The protein is Gag-Pol polyprotein (gag-pol) of Homo sapiens (Human).